The sequence spans 1832 residues: MNAFQDFELGAKLYLQCLLSLSSSRSATPSYTSPVNHAGASPLNAIAHSPVNVSATHRQNFFTPIANQSQQQQQQQPVAVPLDSKWKTTPSPVLYNANNNSSNNNTSSSNNNNNSNWEVGSNSNTHVAATAAATSTVGAQPLPPQTTPVSLVMHAPPPQQQPLQQQHHHHQPPPPPPASLPAPSAPPTSGSSSSHNSVGHATSVIRISSSQQQHQQQQQHQQQAHPHVVVSGGQTFHPVIVDATQLSVPLPPTTVSFHQPNTPTSTAASVASMSQDKMLAKNGYNAPWFKLLPHMTPMSKASPAPVTPTLTTSASSYNVVMMQQQQQHQQLQQQQQLQQQQQSPPQMPLNHNNNHLIVSAPLSSPGKPLNCSMNDAKVAAAAAAAAVANQRQKQQQEEPDDQLDDDVFETTTPGISANSKKQTAAMRLPTHNSNIRKLEECHDDGAAGAPATSAAKRRSQSLSALQQQQQQQQQAGAAGTAAGQPANKKIRRPMNAFMIFSKKHRKMVHKKHPNQDNRTVSKILGEWWYALKPEQKAQYHELASSVKDAHFKLHPEWKWCSKDRRKSSTSTATPGGKASGAAGTGDAKQRLVSVDGSDSLEHDMCPSTPGGSGSCGGQGISSDLQGDIIPLTIDNYNSTCDEAPTTISMKGNGNGKLMKNELPSDEDEQMLVVEEEQQQQTVKKIDLHCRERVNDSDMDDTPFDYRKQQPEANQRSAEEHSTSGANGQAINAPPLSGGEREITLKPKAIKAHPVLESNMLPYTQMSIYTQYTSPKNPIGVTPFQPTGGAFKSMPISPKGSGGKPEDAGSLQAHIKQEDIKQEPPSPYKLNNGSGSASGGGVVSAPPPNSGSVGAIFNFNVPTATALSQKQFHYPMHHPHRSPTDLRDEEADREEITQGTKSGESSEKDKPALDDQERDEVEEEDEDEEDDDEDDEDDEQFMQELASVNASAGFDDLVPYAMPKVVITPTPTPPPVATIVTPIKRKQFTIVRSLTPLQPSNSPHQQLKHLHQRRGETPPTVITRVPTPTINHFTIIRTQQHPHTHPHNTPPPLFFKQKVQGSPVIATVTTSTLSSSSSNPANNEAPNKFSNFPTQHQPTTTTTISCNTNNNATPIIRKLLTLQEGAELGGSHKGTGRAAILYDALVLDTLHGQDEEEEEDEGNAEKQENPKVAGKEQVTTSQPATMLLITDVNAYNQQHVAGNAATPVSGAATLRPVSFISINACNKITLPANARILTAATATSTAAGAAVTSQAGATLTVMTKASAATNHSSSNASDITITAASAAPVPTSGSSIVMINSTTNPSTSSNSTSCSAAAHQACVPSSPAGMGLGHAANIATPPASAPAQIMGGGPASQKMFFAMTHPYTLLQRSHQPGTPSLEHLQLDAFAPGGYTLRNHNGLSSLPPPVSAQPTMLLHGYPPSHGVEPPARSPSYKSMPSTPKSATYLMSAPPERGMDGGMSGCASAAASGGDESDIDADGQQFILAPTPAQLGRAPLQRRKNLSQSKSESNVSFGANLGASNGQHISRKLHSPTMMESSSPIIGHVNSSNLSSALPTPTSSTTTPNSDEQLPLTPTTSSSNSNLNQQQPKSPMKGAPGSTAAALKKKNDEMNNSVLKQVDFEKKYKALPQFQPEDCQSPSAIAVPSSPRVYGTNYRKKNTAPPPVQKLMCEDDSIDEPASAPPTTTQRFFGPDFNNELKELESSDQTGRSPRTPKTPLQSARSDASEKGHRKVLETRRSLVLQLFAEHGNFPTAQATMAFQSKHSDVFPRKQDLQLKIREVRQKLLGQASCTPHSAGPNTPSDSNSSSTTLSASSTSLNMQTTSAADVFQYY.

Phosphoserine occurs at positions 41 and 49. 15 disordered regions span residues 66-121 (ANQS…EVGS), 135-227 (STVG…AHPH), 323-353 (QQQQQHQQLQQQQQLQQQQQSPPQMPLNHNN), 389-427 (NQRQKQQQEEPDDQLDDDVFETTTPGISANSKKQTAAMR), 444-493 (DGAA…IRRP), 563-619 (DRRK…GGQG), 690-739 (RERV…SGGE), 784-845 (QPTG…VSAP), 874-938 (PMHH…EDDE), 1069-1105 (TSTLSSSSSNPANNEAPNKFSNFPTQHQPTTTTTISC), 1151-1178 (GQDEEEEEDEGNAEKQENPKVAGKEQVT), 1457-1602 (DGGM…STAA), 1632-1668 (QPEDCQSPSAIAVPSSPRVYGTNYRKKNTAPPPVQKL), 1701-1733 (LESSDQTGRSPRTPKTPLQSARSDASEKGHRKV), and 1789-1817 (ASCTPHSAGPNTPSDSNSSSTTLSASSTS). Low complexity predominate over residues 96-121 (NANNNSSNNNTSSSNNNNNSNWEVGS). The segment covering 172 to 186 (PPPPPPASLPAPSAP) has biased composition (pro residues). Composition is skewed to low complexity over residues 187–203 (PTSGSSSSHNSVGHATS), 211–223 (QQQHQQQQQHQQQ), and 323–342 (QQQQQHQQLQQQQQLQQQQQ). The segment covering 397–408 (EEPDDQLDDDVF) has biased composition (acidic residues). Polar residues predominate over residues 409 to 422 (ETTTPGISANSKKQ). Residues 446–484 (AAGAPATSAAKRRSQSLSALQQQQQQQQQAGAAGTAAGQ) are compositionally biased toward low complexity. Positions 490–558 (IRRPMNAFMI…AHFKLHPEWK (69 aa)) form a DNA-binding region, HMG box. The span at 610-619 (GGSGSCGGQG) shows a compositional bias: gly residues. The tract at residues 834–1832 (GSASGGGVVS…TSAADVFQYY (999 aa)) is interaction with gro. The segment covering 903 to 914 (ESSEKDKPALDD) has biased composition (basic and acidic residues). Residues 915-938 (QERDEVEEEDEDEEDDDEDDEDDE) show a composition bias toward acidic residues. Residues 1078 to 1091 (NPANNEAPNKFSNF) are compositionally biased toward polar residues. The segment covering 1092–1105 (PTQHQPTTTTTISC) has biased composition (low complexity). The segment covering 1462–1471 (GCASAAASGG) has biased composition (low complexity). Residues 1503 to 1525 (LSQSKSESNVSFGANLGASNGQH) show a composition bias toward polar residues. Positions 1547 to 1589 (NSSNLSSALPTPTSSTTTPNSDEQLPLTPTTSSSNSNLNQQQP) are enriched in low complexity. Thr1716 is modified (phosphothreonine). Over residues 1724–1733 (DASEKGHRKV) the composition is skewed to basic and acidic residues. Residues 1789-1799 (ASCTPHSAGPN) show a composition bias toward polar residues. The segment covering 1800–1817 (TPSDSNSSSTTLSASSTS) has biased composition (low complexity).

Interacts with gro. As to expression, expressed in the central region of embryos. Also expressed in ovarian follicle cells, the wing imaginal disks and the wing pouch.

The protein resides in the nucleus. Its function is as follows. Transcriptional repressor required for the specification of numerous cell types during embryonic development. Required for terminal patterning of early embryos. May associate with gro to repress tll and hkb, restricting their expression to embryonic terminal poles where they initiate correct development of head and tail structures. Required for dorsoventral patterning of oocytes and early embryos. Cooperates with dl to repress zen and other dorsal specific genes within the embryo and promotes expression of the ventralizing factor pip in ovarian follicle cells. Required during wing development for the specification of intervein areas, where it mediates localized repression of vein specific genes such as aos, dpp and vvl. This chain is Putative transcription factor capicua (cic), found in Drosophila melanogaster (Fruit fly).